Consider the following 551-residue polypeptide: Adenine deaminase (551 aa).

This sequence belongs to the metallo-dependent hydrolases superfamily. Adenine deaminase family. Requires Mn(2+) as cofactor.

It catalyses the reaction adenine + H2O + H(+) = hypoxanthine + NH4(+). This Leuconostoc mesenteroides subsp. mesenteroides (strain ATCC 8293 / DSM 20343 / BCRC 11652 / CCM 1803 / JCM 6124 / NCDO 523 / NBRC 100496 / NCIMB 8023 / NCTC 12954 / NRRL B-1118 / 37Y) protein is Adenine deaminase.